A 146-amino-acid chain; its full sequence is 3-dehydroquinate dehydratase (146 aa).

The active-site Proton acceptor is Tyr23. Substrate is bound by residues Asn74, His80, and Asp87. Residue His100 is the Proton donor of the active site. Substrate-binding positions include 101-102 (IS) and Arg111.

It belongs to the type-II 3-dehydroquinase family. As to quaternary structure, homododecamer.

The catalysed reaction is 3-dehydroquinate = 3-dehydroshikimate + H2O. It functions in the pathway metabolic intermediate biosynthesis; chorismate biosynthesis; chorismate from D-erythrose 4-phosphate and phosphoenolpyruvate: step 3/7. Its function is as follows. Catalyzes a trans-dehydration via an enolate intermediate. This is 3-dehydroquinate dehydratase from Bacillus cereus (strain AH820).